The chain runs to 484 residues: Acetyl-coenzyme A carboxylase carboxyl transferase subunit beta, chloroplastic (484 aa).

The region spanning 223–484 (LWIQCDNCYG…LHAFFPLNKN (262 aa)) is the CoA carboxyltransferase N-terminal domain. Zn(2+) contacts are provided by Cys-227, Cys-230, Cys-243, and Cys-246. The C4-type zinc finger occupies 227–246 (CDNCYGLMYKKVKMNVCEQC).

Belongs to the AccD/PCCB family. As to quaternary structure, acetyl-CoA carboxylase is a heterohexamer composed of biotin carboxyl carrier protein, biotin carboxylase and 2 subunits each of ACCase subunit alpha and ACCase plastid-coded subunit beta (accD). Zn(2+) serves as cofactor.

The protein resides in the plastid. Its subcellular location is the chloroplast stroma. The catalysed reaction is N(6)-carboxybiotinyl-L-lysyl-[protein] + acetyl-CoA = N(6)-biotinyl-L-lysyl-[protein] + malonyl-CoA. It participates in lipid metabolism; malonyl-CoA biosynthesis; malonyl-CoA from acetyl-CoA: step 1/1. Component of the acetyl coenzyme A carboxylase (ACC) complex. Biotin carboxylase (BC) catalyzes the carboxylation of biotin on its carrier protein (BCCP) and then the CO(2) group is transferred by the transcarboxylase to acetyl-CoA to form malonyl-CoA. The polypeptide is Acetyl-coenzyme A carboxylase carboxyl transferase subunit beta, chloroplastic (Crucihimalaya wallichii (Rock-cress)).